The primary structure comprises 623 residues: Sodium-coupled monocarboxylate transporter 2 (623 aa).

Over 1-10 the chain is Extracellular; sequence METVGRFQAG. Residues 11 to 31 traverse the membrane as a helical segment; sequence DYVVFACLFVVSSGIGVFFAI. Over 32–50 the chain is Cytoplasmic; the sequence is KERNKAPSKEFLVGGRQMS. A helical membrane pass occupies residues 51 to 71; that stretch reads CGPVALSLTASFMSAVTVIGA. Residues 72–83 are Extracellular-facing; that stretch reads PADVYRFGASYV. A helical transmembrane segment spans residues 84–104; sequence IFGVAYTFVVFFTAELFLPVF. Over 105-129 the chain is Cytoplasmic; the sequence is YRSGITSTYEYLELRFCKLVRVAAT. Residues 130 to 150 form a helical membrane-spanning segment; sequence LIYIIQTILYTGVVVYAPALA. Residues 151-158 are Extracellular-facing; that stretch reads LNQVTGFD. A helical transmembrane segment spans residues 159–179; it reads LWGSIFATGIVCTFYCTLGGL. The Cytoplasmic segment spans residues 180 to 181; it reads KA. Residues 182–202 traverse the membrane as a helical segment; sequence VVWTDAFQMVVMVVGFLTVLI. Over 203–236 the chain is Extracellular; it reads QGSSRAGGIENVWSTSRTGGRLQVFDFDVSPLRR. Residues 237–257 traverse the membrane as a helical segment; sequence HTFWTLSVGGTFTWLGIYGVN. Topologically, residues 258-276 are cytoplasmic; that stretch reads QSTIQRCISCKTEGHARWA. Residues 277–297 traverse the membrane as a helical segment; sequence LYLNLLGLWIILFCAVVSGLI. Topologically, residues 298-322 are extracellular; that stretch reads MYSYYSHCDPWSSGLISAPDQLMPY. Residues 323 to 343 form a helical membrane-spanning segment; the sequence is FVMEILGAFPGLPGLFVACAF. Over 344 to 386 the chain is Cytoplasmic; the sequence is SGTLSTVAASINALATVMYEDFVSQCFPDLSNRAASWISKALC. The helical transmembrane segment at 387 to 407 threads the bilayer; it reads VAFGVACTTMAVAASYMGGIV. Over 408–412 the chain is Extracellular; sequence QAALS. A helical transmembrane segment spans residues 413 to 433; the sequence is IHGMCGGPVLGLFSLGILFPF. Over 434-438 the chain is Cytoplasmic; that stretch reads TNLKG. Residues 439–459 form a helical membrane-spanning segment; the sequence is AVGGLIVGISLSFWVGVGAFI. At 460–510 the chain is on the extracellular side; that stretch reads YPAPSNNTHALELNTAGCNITAAAFEPTSATVTQLTSDRNWLADSWYSMSY. N-linked (GlcNAc...) asparagine glycans are attached at residues N465 and N478. A helical transmembrane segment spans residues 511–531; sequence LYYSAVGFIGTVAAGLLITLL. The Cytoplasmic segment spans residues 532–623; the sequence is TGPMDPKLLK…NETSIVQKKL (92 aa).

This sequence belongs to the sodium:solute symporter (SSF) (TC 2.A.21) family.

The protein resides in the apical cell membrane. The catalysed reaction is (S)-lactate(out) + Na(+)(out) = (S)-lactate(in) + Na(+)(in). The enzyme catalyses nicotinate(out) + Na(+)(out) = nicotinate(in) + Na(+)(in). It catalyses the reaction pyruvate(out) + Na(+)(out) = pyruvate(in) + Na(+)(in). It carries out the reaction propanoate(out) + Na(+)(out) = propanoate(in) + Na(+)(in). The catalysed reaction is butanoate(out) + Na(+)(out) = butanoate(in) + Na(+)(in). The enzyme catalyses acetoacetate(out) + Na(+)(out) = acetoacetate(in) + Na(+)(in). In terms of biological role, acts as an electroneutral and low-affinity sodium (Na(+))-dependent sodium-coupled solute transporter. Catalyzes the transport across the plasma membrane of many monocarboxylates such as lactate, pyruvate, nicotinate, propionate, butyrate and beta-D-hydroxybutyrate. The chain is Sodium-coupled monocarboxylate transporter 2 (slc5a12) from Danio rerio (Zebrafish).